The chain runs to 366 residues: Protein FAM110B (366 aa).

3 disordered regions span residues 127–150 (SSEG…HRDT), 163–182 (KVYP…HVSR), and 214–253 (IPCS…PSLQ). Residues serine 234 and serine 297 each carry the phosphoserine modification. Positions 313–333 (DCEQSQDSNSDLRNDDSANDR) are disordered. Positions 322 to 331 (SDLRNDDSAN) are enriched in basic and acidic residues.

It belongs to the FAM110 family.

It localises to the cytoplasm. The protein localises to the cytoskeleton. It is found in the microtubule organizing center. Its subcellular location is the centrosome. The protein is Protein FAM110B (Fam110b) of Rattus norvegicus (Rat).